The sequence spans 279 residues: Tryptophan synthase alpha chain (279 aa).

Residues Glu49 and Asp60 each act as proton acceptor in the active site.

Belongs to the TrpA family. As to quaternary structure, tetramer of two alpha and two beta chains.

It carries out the reaction (1S,2R)-1-C-(indol-3-yl)glycerol 3-phosphate + L-serine = D-glyceraldehyde 3-phosphate + L-tryptophan + H2O. It functions in the pathway amino-acid biosynthesis; L-tryptophan biosynthesis; L-tryptophan from chorismate: step 5/5. Its function is as follows. The alpha subunit is responsible for the aldol cleavage of indoleglycerol phosphate to indole and glyceraldehyde 3-phosphate. The chain is Tryptophan synthase alpha chain from Nitrosospira multiformis (strain ATCC 25196 / NCIMB 11849 / C 71).